Here is a 381-residue protein sequence, read N- to C-terminus: cAMP-dependent protein kinase type I-beta regulatory subunit (381 aa).

The dimerization and phosphorylation stretch occupies residues alanine 2–valine 136. Position 3 is a phosphoserine (serine 3). Tyrosine 21 carries the post-translational modification 3'-nitrotyrosine. The disordered stretch occupies residues alanine 67 to glycine 98. 2 positions are modified to phosphoserine: serine 77 and serine 83. Threonine 85 is subject to Phosphothreonine. A Pseudophosphorylation motif motif is present at residues arginine 96–valine 100. Position 97 is an omega-N-methylarginine (arginine 97). 3',5'-cyclic AMP contacts are provided by residues leucine 137–serine 254, glutamate 202, arginine 211, isoleucine 255–valine 381, glutamate 326, and arginine 335.

This sequence belongs to the cAMP-dependent kinase regulatory chain family. As to quaternary structure, the inactive holoenzyme is composed of two regulatory chains and two catalytic chains. Activation by cAMP releases the two active catalytic monomers and the regulatory dimer. Interacts with PRKX; regulates this cAMP-dependent protein kinase. Interacts with C2orf88/smAKAP; this interaction may target PRKAR1B to the plasma membrane. The pseudophosphorylation site binds to the substrate-binding region of the catalytic chain, resulting in the inhibition of its activity. In terms of tissue distribution, four types of regulatory chains are found: I-alpha, I-beta, II-alpha, and II-beta. Their expression varies among tissues and is in some cases constitutive and in others inducible.

It localises to the cell membrane. Regulatory subunit of the cAMP-dependent protein kinases involved in cAMP signaling in cells. In Homo sapiens (Human), this protein is cAMP-dependent protein kinase type I-beta regulatory subunit (PRKAR1B).